The chain runs to 167 residues: Crossover junction endodeoxyribonuclease RuvC (167 aa).

Residues Asp8, Glu68, and Asp140 contribute to the active site. Residues Asp8, Glu68, and Asp140 each contribute to the Mg(2+) site.

This sequence belongs to the RuvC family. Homodimer which binds Holliday junction (HJ) DNA. The HJ becomes 2-fold symmetrical on binding to RuvC with unstacked arms; it has a different conformation from HJ DNA in complex with RuvA. In the full resolvosome a probable DNA-RuvA(4)-RuvB(12)-RuvC(2) complex forms which resolves the HJ. Mg(2+) serves as cofactor.

Its subcellular location is the cytoplasm. It carries out the reaction Endonucleolytic cleavage at a junction such as a reciprocal single-stranded crossover between two homologous DNA duplexes (Holliday junction).. Functionally, the RuvA-RuvB-RuvC complex processes Holliday junction (HJ) DNA during genetic recombination and DNA repair. Endonuclease that resolves HJ intermediates. Cleaves cruciform DNA by making single-stranded nicks across the HJ at symmetrical positions within the homologous arms, yielding a 5'-phosphate and a 3'-hydroxyl group; requires a central core of homology in the junction. The consensus cleavage sequence is 5'-(A/T)TT(C/G)-3'. Cleavage occurs on the 3'-side of the TT dinucleotide at the point of strand exchange. HJ branch migration catalyzed by RuvA-RuvB allows RuvC to scan DNA until it finds its consensus sequence, where it cleaves and resolves the cruciform DNA. The sequence is that of Crossover junction endodeoxyribonuclease RuvC from Sinorhizobium medicae (strain WSM419) (Ensifer medicae).